Reading from the N-terminus, the 412-residue chain is Indian hedgehog B protein (412 aa).

Positions 1–23 are cleaved as a signal peptide; that stretch reads MRLSTAAALLTGFILAFSPAYDG. Residue Cys24 is the site of N-palmitoyl cysteine attachment. Ca(2+) is bound by residues Glu89, Glu90, Asp95, Thr125, Glu126, Asp129, and Asp131. 3 residues coordinate Zn(2+): His140, Asp147, and His182. A lipid anchor (Cholesterol glycine ester) is attached at Gly197.

Belongs to the hedgehog family. In terms of assembly, multimer. Interacts with BOC and CDON. Interacts with PTCH1. Interacts with glypican GPC3. Post-translationally, cholesterylation is required for N-product targeting to lipid rafts and multimerization. The C-terminal domain displays an autoproteolysis activity and a cholesterol transferase activity. Both activities result in the cleavage of the full-length protein and covalent attachment of a cholesterol moiety to the C-terminal of the newly generated N-product. The N-product is the active species in both local and long-range signaling, whereas the C-product is degraded in the endoplasmic reticulum. In terms of processing, N-palmitoylation by HHAT of N-product is required for indian hedgehog protein N-product multimerization and full activity. As to expression, expressed exclusively in the notochord.

The protein localises to the cell membrane. Its subcellular location is the endoplasmic reticulum membrane. It localises to the golgi apparatus membrane. The protein resides in the secreted. The catalysed reaction is glycyl-L-cysteinyl-[protein] + cholesterol + H(+) = [protein]-C-terminal glycyl cholesterol ester + N-terminal L-cysteinyl-[protein]. Functionally, signal involved in the early induction and patterning of anterodorsal ectoderm, nervous system and somites. It is involved in the regulation of endochondral skeleton formation, and the development of retinal pigment epithelium (RPE), photoreceptors and periocular tissues. In terms of biological role, the C-terminal part of the indian hedgehog protein precursor displays an autoproteolysis and a cholesterol transferase activity. Both activities result in the cleavage of the full-length protein into two parts followed by the covalent attachment of a cholesterol moiety to the C-terminal of the newly generated N-product. Both activities occur in the endoplasmic reticulum. Its function is as follows. The dually lipidated indian hedgehog protein N-product is a morphogen which is essential for a variety of patterning events during development. Binds to the patched (PTCH1) receptor, which functions in association with smoothened (SMO), to activate the transcription of target genes. In the notochord, induces somite patterning and muscle pioneer differentiation. The chain is Indian hedgehog B protein (ihhb) from Danio rerio (Zebrafish).